The sequence spans 205 residues: Ribosomal RNA small subunit methyltransferase G (205 aa).

S-adenosyl-L-methionine is bound by residues Gly-70, Leu-75, 121–122 (IE), and Arg-136.

It belongs to the methyltransferase superfamily. RNA methyltransferase RsmG family.

Its subcellular location is the cytoplasm. The catalysed reaction is guanosine(527) in 16S rRNA + S-adenosyl-L-methionine = N(7)-methylguanosine(527) in 16S rRNA + S-adenosyl-L-homocysteine. Its function is as follows. Specifically methylates the N7 position of guanine in position 527 of 16S rRNA. This Methylococcus capsulatus (strain ATCC 33009 / NCIMB 11132 / Bath) protein is Ribosomal RNA small subunit methyltransferase G.